The following is a 332-amino-acid chain: Biotin synthase (332 aa).

The Radical SAM core domain occupies 51–278 (RTIQLSTLMS…KSYVRLSAGR (228 aa)). Residues C66, C70, and C73 each coordinate [4Fe-4S] cluster. Positions 110, 141, 201, and 273 each coordinate [2Fe-2S] cluster.

It belongs to the radical SAM superfamily. Biotin synthase family. As to quaternary structure, homodimer. [4Fe-4S] cluster serves as cofactor. Requires [2Fe-2S] cluster as cofactor.

It catalyses the reaction (4R,5S)-dethiobiotin + (sulfur carrier)-SH + 2 reduced [2Fe-2S]-[ferredoxin] + 2 S-adenosyl-L-methionine = (sulfur carrier)-H + biotin + 2 5'-deoxyadenosine + 2 L-methionine + 2 oxidized [2Fe-2S]-[ferredoxin]. It functions in the pathway cofactor biosynthesis; biotin biosynthesis; biotin from 7,8-diaminononanoate: step 2/2. Catalyzes the conversion of dethiobiotin (DTB) to biotin by the insertion of a sulfur atom into dethiobiotin via a radical-based mechanism. The polypeptide is Biotin synthase (Haemophilus influenzae (strain PittGG)).